Here is a 793-residue protein sequence, read N- to C-terminus: Sucrose synthase (793 aa).

The segment at 259 to 738 (MILNIAIISP…AIKRVTEKYS (480 aa)) is GT-B glycosyltransferase.

Belongs to the glycosyltransferase 1 family. In terms of assembly, homotetramer.

The enzyme catalyses an NDP-alpha-D-glucose + D-fructose = a ribonucleoside 5'-diphosphate + sucrose + H(+). Its function is as follows. Catalyzes the reversible conversion of sucrose and a nucleotide disphosphate (NDP) into fructose and NDP-glucose; although the reaction is freely reversible in vitro, the physiological reaction seems to be sucrose cleavage. Unlike characterized plant enzymes prefers ADP as a cosubstrate, whereas plants prefer UDP. Its preference for ADP over UDP suggests it may directly link sucrose and glycogen metabolism. The chain is Sucrose synthase from Melioribacter roseus (strain JCM 17771 / P3M-2).